Here is a 199-residue protein sequence, read N- to C-terminus: Peroxiredoxin-1 (199 aa).

Residue Ser-2 is modified to N-acetylserine. The region spanning 6–165 (AKIGYPAPNF…ILRLVQAFQF (160 aa)) is the Thioredoxin domain. Lys-7 is modified (N6-acetyllysine; alternate). Residue Lys-7 forms a Glycyl lysine isopeptide (Lys-Gly) (interchain with G-Cter in SUMO2); alternate linkage. Position 16 is an N6-acetyllysine (Lys-16). Ser-32 is modified (phosphoserine). Catalysis depends on Cys-52, which acts as the Cysteine sulfenic acid (-SOH) intermediate. A Phosphothreonine modification is found at Thr-90. Residue Lys-120 forms a Glycyl lysine isopeptide (Lys-Gly) (interchain with G-Cter in SUMO2) linkage. Lys-136 is modified (N6-acetyllysine). The segment at 176-199 (GWKPGSDTIKPDVQKSKEYFSKQK) is disordered. Positions 184–199 (IKPDVQKSKEYFSKQK) are enriched in basic and acidic residues. A Glycyl lysine isopeptide (Lys-Gly) (interchain with G-Cter in SUMO1) cross-link involves residue Lys-185. Lys-197 carries the post-translational modification N6-acetyllysine.

The protein belongs to the peroxiredoxin family. AhpC/Prx1 subfamily. As to quaternary structure, homodimer; disulfide-linked, upon oxidation. 5 homodimers assemble to form a ring-like decamer. Interacts with GDPD5; forms a mixed-disulfide with GDPD5. Interacts with SESN1 and SESN2. Interacts with FAM107A. Post-translationally, phosphorylated on Thr-90 during the M-phase, which leads to a decrease in enzymatic activity. Acetylation increases reducing activity and resistance to superoxidation. Deacetylated by HDAC6 which decreases reducing activity.

Its subcellular location is the cytoplasm. The enzyme catalyses a hydroperoxide + [thioredoxin]-dithiol = an alcohol + [thioredoxin]-disulfide + H2O. Functionally, thiol-specific peroxidase that catalyzes the reduction of hydrogen peroxide and organic hydroperoxides to water and alcohols, respectively. Plays a role in cell protection against oxidative stress by detoxifying peroxides and as sensor of hydrogen peroxide-mediated signaling events. Might participate in the signaling cascades of growth factors and tumor necrosis factor-alpha by regulating the intracellular concentrations of H(2)O(2). Reduces an intramolecular disulfide bond in GDPD5 that gates the ability to GDPD5 to drive postmitotic motor neuron differentiation. This is Peroxiredoxin-1 (PRDX1) from Cricetulus griseus (Chinese hamster).